We begin with the raw amino-acid sequence, 878 residues long: Vacuolar membrane protease (878 aa).

Over 1-16 (MASLRLPRANPLAFTR) the chain is Cytoplasmic. The helical transmembrane segment at 17–37 (WPVTVITAIVYLALLIPLLVV) threads the bilayer. Topologically, residues 38–390 (HHVVPSAPSS…STFVLFQLHT (353 aa)) are vacuolar. N-linked (GlcNAc...) asparagine glycans are attached at residues asparagine 53 and asparagine 119. Residues histidine 174 and aspartate 186 each coordinate Zn(2+). The active-site Proton acceptor is the glutamate 220. 3 residues coordinate Zn(2+): glutamate 221, glutamate 246, and histidine 319. The helical transmembrane segment at 391 to 411 (LFALLVTLLIVGPLTLLFTSI) threads the bilayer. Topologically, residues 412–442 (ALTKADKMYLFRSSAKSEDRLDVVPLQGLRG) are cytoplasmic. A helical transmembrane segment spans residues 443–463 (FFRFPFLFGIPTVVTVGLAYL). Topologically, residues 464-473 (VTKVNPYIIH) are vacuolar. A helical transmembrane segment spans residues 474-494 (SSAYAVWSMMVAAWVFLAWFV). Over 495-508 (SRVADFARPSAFHR) the chain is Cytoplasmic. Residues 509–529 (IYTLTWMYVLSWVSAVIATVY) form a helical membrane-spanning segment. Over 530–533 (ANQR) the chain is Vacuolar. A helical membrane pass occupies residues 534 to 554 (GLAGGYFIFFFHAGIFLATWI). Over 555–659 (SYLELFALPS…ALPKWTWGLQ (105 aa)) the chain is Cytoplasmic. The span at 577–590 (GRASGHGSRRGTTS) shows a compositional bias: low complexity. A disordered region spans residues 577–611 (GRASGHGSRRGTTSGEDDGEEAEEEPTESTSLLGS). A compositionally biased stretch (acidic residues) spans 591–603 (GEDDGEEAEEEPT). The chain crosses the membrane as a helical span at residues 660 to 680 (LLLTAPITLIMVGPLALLTIS). Over 681–693 (AISQTGQDGGHPL) the chain is Vacuolar. Residues 694–714 (FAYVAIAIFTTIMLTPLLPFI) traverse the membrane as a helical segment. The Cytoplasmic portion of the chain corresponds to 715–721 (HRYTYHV). The helical transmembrane segment at 722–742 (PLFLLAVFLGTLIYNLVAFPF) threads the bilayer. The Vacuolar portion of the chain corresponds to 743–878 (SDSNRLKLYY…RRAFEIGNDD (136 aa)).

The protein belongs to the peptidase M28 family. Zn(2+) serves as cofactor.

The protein localises to the vacuole membrane. May be involved in vacuolar sorting and osmoregulation. The protein is Vacuolar membrane protease of Aspergillus flavus (strain ATCC 200026 / FGSC A1120 / IAM 13836 / NRRL 3357 / JCM 12722 / SRRC 167).